Reading from the N-terminus, the 315-residue chain is MQKPWVEKYRPETLPEVVGHHEIIKRLTNYVEKKSMPHLLFSGSPGVGKTTAALALAKDLYGETWRENFLELNSSDERGIDVIRTKVKDFARTKPIGDAPFKVIFLDESDALTSDAQNALRRTMEKYSDICRFILSCNYPSKIIPPIQSRCAIFRFSPLKTEDLVENLKDISEKETLTLEKGGIDAIIYVSEGDMRKAINVLQTAAAVSDTVTEEIVYKVASKARPDEIKKMTHLALNGKFVEAKEQLYNLMIDWGMSGEDILIQVFREVPNLDISEKEKVHLVEAIGECDFRIVEGSNERIQLSALLAKMGILE.

43 to 50 (GSPGVGKT) is a binding site for ATP.

The protein belongs to the activator 1 small subunits family. RfcS subfamily. Heteromultimer composed of small subunits (RfcS) and large subunits (RfcL).

Functionally, part of the RFC clamp loader complex which loads the PCNA sliding clamp onto DNA. The sequence is that of Replication factor C small subunit from Methanococcus maripaludis (strain C5 / ATCC BAA-1333).